The sequence spans 166 residues: Putative transcriptional regulatory protein for hcr operon (166 aa).

The 155-residue stretch at Met-1–Arg-155 folds into the HTH marR-type domain.

In terms of biological role, may be involved in the regulation of genes for 4-hydroxybenzoyl-CoA reductase. The sequence is that of Putative transcriptional regulatory protein for hcr operon from Thauera aromatica.